Here is a 456-residue protein sequence, read N- to C-terminus: Exodeoxyribonuclease 7 large subunit (456 aa).

This sequence belongs to the XseA family. As to quaternary structure, heterooligomer composed of large and small subunits.

Its subcellular location is the cytoplasm. The enzyme catalyses Exonucleolytic cleavage in either 5'- to 3'- or 3'- to 5'-direction to yield nucleoside 5'-phosphates.. Its function is as follows. Bidirectionally degrades single-stranded DNA into large acid-insoluble oligonucleotides, which are then degraded further into small acid-soluble oligonucleotides. The protein is Exodeoxyribonuclease 7 large subunit of Lactobacillus delbrueckii subsp. bulgaricus (strain ATCC 11842 / DSM 20081 / BCRC 10696 / JCM 1002 / NBRC 13953 / NCIMB 11778 / NCTC 12712 / WDCM 00102 / Lb 14).